A 541-amino-acid polypeptide reads, in one-letter code: Membrane protein insertase YidC (541 aa).

Residues 7-27 form a helical membrane-spanning segment; the sequence is ILLLALALVSFLLFQQWQVET. Residues 34–55 are compositionally biased toward polar residues; it reads TVSTVQQTHKNGDVPTSSTANS. The tract at residues 34–59 is disordered; that stretch reads TVSTVQQTHKNGDVPTSSTANSDAPV. The next 4 membrane-spanning stretches (helical) occupy residues 343 to 363, 418 to 438, 456 to 476, and 495 to 515; these read SFIQ…TFIV, LGGC…YWAL, LSAQ…MFLI, and FIPV…VLYW.

It belongs to the OXA1/ALB3/YidC family. Type 1 subfamily. Interacts with the Sec translocase complex via SecD. Specifically interacts with transmembrane segments of nascent integral membrane proteins during membrane integration.

The protein localises to the cell inner membrane. Functionally, required for the insertion and/or proper folding and/or complex formation of integral membrane proteins into the membrane. Involved in integration of membrane proteins that insert both dependently and independently of the Sec translocase complex, as well as at least some lipoproteins. Aids folding of multispanning membrane proteins. In Aliivibrio salmonicida (strain LFI1238) (Vibrio salmonicida (strain LFI1238)), this protein is Membrane protein insertase YidC.